The primary structure comprises 165 residues: Regulator of ribonuclease activity A (165 aa).

This sequence belongs to the RraA family. Homotrimer. Binds to both RNA-binding sites in the C-terminal region of Rne and to RhlB.

The protein resides in the cytoplasm. Its function is as follows. Globally modulates RNA abundance by binding to RNase E (Rne) and regulating its endonucleolytic activity. Can modulate Rne action in a substrate-dependent manner by altering the composition of the degradosome. Modulates RNA-binding and helicase activities of the degradosome. This Actinobacillus pleuropneumoniae serotype 7 (strain AP76) protein is Regulator of ribonuclease activity A.